The following is a 490-amino-acid chain: Cytochrome P450 71A19 (490 aa).

A helical membrane pass occupies residues 3–23 (IILVTLCLTTLLALLLLKSIL). Position 433 (Cys433) interacts with heme.

This sequence belongs to the cytochrome P450 family. It depends on heme as a cofactor.

Its subcellular location is the membrane. This Arabidopsis thaliana (Mouse-ear cress) protein is Cytochrome P450 71A19 (CYP71A19).